A 177-amino-acid chain; its full sequence is ATP synthase subunit delta (177 aa).

This sequence belongs to the ATPase delta chain family. F-type ATPases have 2 components, F(1) - the catalytic core - and F(0) - the membrane proton channel. F(1) has five subunits: alpha(3), beta(3), gamma(1), delta(1), epsilon(1). F(0) has three main subunits: a(1), b(2) and c(10-14). The alpha and beta chains form an alternating ring which encloses part of the gamma chain. F(1) is attached to F(0) by a central stalk formed by the gamma and epsilon chains, while a peripheral stalk is formed by the delta and b chains.

The protein localises to the cell inner membrane. Functionally, f(1)F(0) ATP synthase produces ATP from ADP in the presence of a proton or sodium gradient. F-type ATPases consist of two structural domains, F(1) containing the extramembraneous catalytic core and F(0) containing the membrane proton channel, linked together by a central stalk and a peripheral stalk. During catalysis, ATP synthesis in the catalytic domain of F(1) is coupled via a rotary mechanism of the central stalk subunits to proton translocation. This protein is part of the stalk that links CF(0) to CF(1). It either transmits conformational changes from CF(0) to CF(1) or is implicated in proton conduction. The protein is ATP synthase subunit delta of Neisseria meningitidis serogroup A / serotype 4A (strain DSM 15465 / Z2491).